We begin with the raw amino-acid sequence, 545 residues long: Protein BTN1 (545 aa).

Residues 23–49 are disordered; the sequence is AHSSASDPRRTMVTNTSESPLASRQAT. A compositionally biased stretch (polar residues) spans 34–49; that stretch reads MVTNTSESPLASRQAT. A run of 5 helical transmembrane segments spans residues 66–86, 97–117, 127–147, 205–225, and 234–254; these read AFFL…TAAL, LVSF…PYFL, VWSC…FPAL, VGWF…AWWV, and GMAI…IILP. Residues 276-304 form a disordered region; the sequence is TEDDAVERSSSDDQPTTANDDRQDSTIHI. Transmembrane regions (helical) follow at residues 322–342, 408–428, and 440–460; these read MALL…VYAM, LLWL…TESL, and LVIV…VSVF.

Belongs to the battenin family.

The protein localises to the vacuole membrane. Its function is as follows. Involved in vacuolar transport and vacuole pH homeostasis. Also required for cytokinesis. This Mycosarcoma maydis (Corn smut fungus) protein is Protein BTN1 (BTN1).